Consider the following 370-residue polypeptide: Gap junction delta-4 protein (370 aa).

Over 1 to 19 (MEGVDLLGFLIITLNCNVT) the chain is Cytoplasmic. Residues 20 to 40 (MXGKLWFVLTMLLRMLVIVLA) traverse the membrane as a helical segment. The Extracellular portion of the chain corresponds to 41 to 76 (GRPVYQDEQERFVCNTLQPGCANVCYDVFSPVSHLR). A helical membrane pass occupies residues 77 to 97 (FWLIQGVCVLLPSAVFSVYVL). At 98–146 (HRGATLAALGPRRCPEPRDTASGQRRCPGSCRERGGLEVPDFSAGYIIH) the chain is on the cytoplasmic side. Residues 147-167 (LLLRTLLEAAFGALNYLLFGF) form a helical membrane-spanning segment. Residues 168–196 (LAPNKFPCTRPPCTGVVDCYVSRPTEKSL) lie on the Extracellular side of the membrane. The helical transmembrane segment at 197–217 (LMLFLWAVSALSFLLGLADLV) threads the bilayer. Residues 218–370 (CSLRRLMRRR…HLRARKSEWV (153 aa)) are Cytoplasmic-facing. Residues 227–370 (RPGPPTSPSI…HLRARKSEWV (144 aa)) form a disordered region. Residues 246 to 260 (PEGRPTDKEGGREQE) are compositionally biased toward basic and acidic residues. A compositionally biased stretch (low complexity) spans 331-345 (PSAAPSHLAAHPSCS).

This sequence belongs to the connexin family. Delta-type subfamily. As to quaternary structure, a connexon is composed of a hexamer of connexins.

The protein localises to the cell membrane. The protein resides in the cell junction. It localises to the gap junction. Its function is as follows. One gap junction consists of a cluster of closely packed pairs of transmembrane channels, the connexons, through which materials of low MW diffuse from one cell to a neighboring cell. This chain is Gap junction delta-4 protein (GJD4), found in Macaca fascicularis (Crab-eating macaque).